A 1161-amino-acid chain; its full sequence is DNA-directed RNA polymerase III subunit 2 (1161 aa).

The C4-type zinc finger occupies 1104–1125 (CRACGLLGYYNYKLKKAVCTTC).

Belongs to the RNA polymerase beta chain family. As to quaternary structure, component of the RNA polymerase III (Pol III) complex consisting of 17 subunits.

The protein localises to the nucleus. The enzyme catalyses RNA(n) + a ribonucleoside 5'-triphosphate = RNA(n+1) + diphosphate. Its function is as follows. DNA-dependent RNA polymerase catalyzes the transcription of DNA into RNA using the four ribonucleoside triphosphates as substrates. Second largest core component of RNA polymerase III which synthesizes small RNAs, such as 5S rRNA and tRNAs. Proposed to contribute to the polymerase catalytic activity and forms the polymerase active center together with the largest subunit. Pol III is composed of mobile elements and NRPC2 is part of the core element with the central large cleft and probably a clamp element that moves to open and close the cleft. Functionally, essential for the completion of the three rounds of mitosis in female megaspores required for the development of mature gametophytes. This chain is DNA-directed RNA polymerase III subunit 2, found in Arabidopsis thaliana (Mouse-ear cress).